The chain runs to 235 residues: Phosphoribosylaminoimidazole-succinocarboxamide synthase (235 aa).

It belongs to the SAICAR synthetase family.

It catalyses the reaction 5-amino-1-(5-phospho-D-ribosyl)imidazole-4-carboxylate + L-aspartate + ATP = (2S)-2-[5-amino-1-(5-phospho-beta-D-ribosyl)imidazole-4-carboxamido]succinate + ADP + phosphate + 2 H(+). The protein operates within purine metabolism; IMP biosynthesis via de novo pathway; 5-amino-1-(5-phospho-D-ribosyl)imidazole-4-carboxamide from 5-amino-1-(5-phospho-D-ribosyl)imidazole-4-carboxylate: step 1/2. The sequence is that of Phosphoribosylaminoimidazole-succinocarboxamide synthase from Thermoanaerobacter pseudethanolicus (strain ATCC 33223 / 39E) (Clostridium thermohydrosulfuricum).